We begin with the raw amino-acid sequence, 130 residues long: D-ribose pyranase (130 aa).

The active-site Proton donor is the His20. Residues Asp28, His97, and 119 to 121 contribute to the substrate site; that span reads YSN.

It belongs to the RbsD / FucU family. RbsD subfamily. Homodecamer.

The protein localises to the cytoplasm. The catalysed reaction is beta-D-ribopyranose = beta-D-ribofuranose. It functions in the pathway carbohydrate metabolism; D-ribose degradation; D-ribose 5-phosphate from beta-D-ribopyranose: step 1/2. Its function is as follows. Catalyzes the interconversion of beta-pyran and beta-furan forms of D-ribose. This is D-ribose pyranase from Lacticaseibacillus casei (strain BL23) (Lactobacillus casei).